The sequence spans 256 residues: Calsenilin (256 aa).

A disordered region spans residues 1–20 (MQPAKEVTKASDGSLLGDLG). At S14 the chain carries Phosphoserine. Residue K26 forms a Glycyl lysine isopeptide (Lys-Gly) (interchain with G-Cter in SUMO1) linkage. 2 S-palmitoyl cysteine lipidation sites follow: C45 and C46. Residue S60 is modified to Phosphoserine. At S63 the chain carries Phosphoserine; by CK1. Positions 67 to 123 (LELSTVRHQPEGLDQLQAQTKFTKKELQSLYRGFKNECPTGLVDEDTFKLIYAQFFP) constitute an EF-hand 1; degenerate domain. Residue K90 forms a Glycyl lysine isopeptide (Lys-Gly) (interchain with G-Cter in SUMO1) linkage. 3 EF-hand domains span residues 126–161 (DATT…LLRG), 162–197 (TVHE…IYDM), and 210–245 (APAE…DENI). Residues D175, N177, D179, Y181, E186, D223, N225, D227, and E234 each contribute to the Ca(2+) site. Positions 243-256 (ENIMSSMQLFENVI) are interaction with KCND2.

Belongs to the recoverin family. As to quaternary structure, binds to DNA as a homomultimer. Dimerization is induced by binding to calcium. Interacts with the C-terminus of PSEN1 and PSEN2 and with PSEN2 CTF subunit. Associates with KCN1. Component of heteromultimeric potassium channels. Identified in potassium channel complexes containing KCND1, KCND2, KCND3, KCNIP1, KCNIP2, KCNIP3, KCNIP4, DPP6 and DPP10. Interacts with KCND2 and KCND3. Palmitoylated. Palmitoylation enhances association with the plasma membrane. Post-translationally, proteolytically cleaved by caspase-3. In terms of processing, phosphorylation at Ser-63 inhibits cleavage by CASP3. Highly expressed in brain. Widely expressed at lower levels. Expression levels are elevated in brain cortex regions affected by Alzheimer disease.

Its subcellular location is the cytoplasm. It is found in the cell membrane. The protein resides in the endoplasmic reticulum. It localises to the golgi apparatus. The protein localises to the nucleus. Calcium-dependent transcriptional repressor that binds to the DRE element of genes including PDYN and FOS. Affinity for DNA is reduced upon binding to calcium and enhanced by binding to magnesium. Seems to be involved in nociception. In terms of biological role, regulatory subunit of Kv4/D (Shal)-type voltage-gated rapidly inactivating A-type potassium channels, such as KCND2/Kv4.2 and KCND3/Kv4.3. Modulates channel expression at the cell membrane, gating characteristics, inactivation kinetics and rate of recovery from inactivation in a calcium-dependent and isoform-specific manner. Its function is as follows. May play a role in the regulation of PSEN2 proteolytic processing and apoptosis. Together with PSEN2 involved in modulation of amyloid-beta formation. This chain is Calsenilin (KCNIP3), found in Homo sapiens (Human).